The primary structure comprises 225 residues: Uracil-DNA glycosylase (225 aa).

The active-site Proton acceptor is Asp65.

This sequence belongs to the uracil-DNA glycosylase (UDG) superfamily. UNG family.

It is found in the cytoplasm. It catalyses the reaction Hydrolyzes single-stranded DNA or mismatched double-stranded DNA and polynucleotides, releasing free uracil.. Excises uracil residues from the DNA which can arise as a result of misincorporation of dUMP residues by DNA polymerase or due to deamination of cytosine. The sequence is that of Uracil-DNA glycosylase from Clostridium beijerinckii (strain ATCC 51743 / NCIMB 8052) (Clostridium acetobutylicum).